We begin with the raw amino-acid sequence, 678 residues long: MEVLIGDPITTCLSPSVYDIICNLGFQLRENCDINSIVTQNGEVCWKTITDCVSYTESEQGLDYWGSVRLLGPVCEAVHSHFLSLTKGQFEIRYAPWFQWTSFPELFPEIFDALESLQSPAISLSLMKLTSCLERALGDVFLLIGKECPFLLRDLLSSEELAQVFSQSVMNVLKVFVGSPCGLNLRNVLWHGFASPEEIPPKYCSMMILLTAGLGQLLKSYLQNTKLTLAHRSFISLTNLEDLIVFPDVTYEVLSVLEEVMMKSAFILKIMLPYWEVALVKFKSHRFADCAILLLTQLETGLRNVFATLNRCPKRLLTAESTALYTTFDQILAKHLNDGKINQLPLFLGEPAMEFLWDFLNHQEGPRIRDHLSHGEINLHEFSKETTNQLLAFSLVLLLRFVDDCLLSVFKEKSAVELLISLAEGYSSRCHPVFQLKKQVLSCEESIRVWALLPFPEELTRQAVRLEDNSETNACHSLITKMTDELYHHMPENRCVLKDLDRLPTETWPQLLRELCSTPVPTLFCPRIVLEVLVVLRSISEQCRRVSSQVTVASELRHRQWVERTLRSRQRQNYLRMWSSIRLLSPVLSLILLLIALELVNIHAVCGKNAHEYQQYLKFVKSILQYTENLVAYTSYEKNKWNETINLTHTALLKMWTFSEKKQMLIHLAKKSTSKVLL.

A run of 2 helical transmembrane segments spans residues 390–410 and 587–607; these read LLAF…LSVF and VLSL…AVCG.

The protein resides in the endoplasmic reticulum membrane. May play a role in neuronal migration during embryonic development. In Homo sapiens (Human), this protein is Endoplasmic reticulum membrane-associated RNA degradation protein (ERMARD).